An 86-amino-acid chain; its full sequence is Acyl carrier protein (86 aa).

Residues Ala2 to Gly82 enclose the Carrier domain. At Ser37 the chain carries O-(pantetheine 4'-phosphoryl)serine.

It belongs to the acyl carrier protein (ACP) family. In terms of processing, 4'-phosphopantetheine is transferred from CoA to a specific serine of apo-ACP by AcpS. This modification is essential for activity because fatty acids are bound in thioester linkage to the sulfhydryl of the prosthetic group.

The protein resides in the cytoplasm. It functions in the pathway lipid metabolism; fatty acid biosynthesis. Functionally, carrier of the growing fatty acid chain in fatty acid biosynthesis. The protein is Acyl carrier protein of Dehalococcoides mccartyi (strain ATCC BAA-2266 / KCTC 15142 / 195) (Dehalococcoides ethenogenes (strain 195)).